A 256-amino-acid chain; its full sequence is L-erythrulose-1-phosphate isomerase (256 aa).

The Electrophile role is filled by His-96. Catalysis depends on Glu-169, which acts as the Proton acceptor. Residues Gly-175 and Ser-212 each contribute to the substrate site.

This sequence belongs to the triosephosphate isomerase family. In terms of assembly, homodimer.

It localises to the cytoplasm. It catalyses the reaction L-erythrulose 1-phosphate = D-erythrulose 4-phosphate. The protein operates within carbohydrate metabolism; erythritol degradation. Catalyzes the isomerization of D-erythrulose-4P to L-erythrulose-1P. Involved in the degradation pathway of erythritol, that allows B.abortus to grow on this compound as the sole carbon source. This Brucella abortus (strain 2308) protein is L-erythrulose-1-phosphate isomerase.